Consider the following 122-residue polypeptide: Small ribosomal subunit protein uS13 (122 aa).

Residues 95–122 (GLPVHGQRTHTNARTRKGPRKGAVGKKK) form a disordered region.

The protein belongs to the universal ribosomal protein uS13 family. As to quaternary structure, part of the 30S ribosomal subunit. Forms a loose heterodimer with protein S19. Forms two bridges to the 50S subunit in the 70S ribosome.

In terms of biological role, located at the top of the head of the 30S subunit, it contacts several helices of the 16S rRNA. In the 70S ribosome it contacts the 23S rRNA (bridge B1a) and protein L5 of the 50S subunit (bridge B1b), connecting the 2 subunits; these bridges are implicated in subunit movement. Contacts the tRNAs in the A and P-sites. The polypeptide is Small ribosomal subunit protein uS13 (Lawsonia intracellularis (strain PHE/MN1-00)).